The following is a 178-amino-acid chain: ATP-dependent protease subunit HslV (178 aa).

The active site involves threonine 7. Residues glycine 162, cysteine 165, and threonine 168 each coordinate Na(+).

It belongs to the peptidase T1B family. HslV subfamily. As to quaternary structure, a double ring-shaped homohexamer of HslV is capped on each side by a ring-shaped HslU homohexamer. The assembly of the HslU/HslV complex is dependent on binding of ATP.

It localises to the cytoplasm. The enzyme catalyses ATP-dependent cleavage of peptide bonds with broad specificity.. Allosterically activated by HslU binding. Its function is as follows. Protease subunit of a proteasome-like degradation complex believed to be a general protein degrading machinery. The polypeptide is ATP-dependent protease subunit HslV (Burkholderia lata (strain ATCC 17760 / DSM 23089 / LMG 22485 / NCIMB 9086 / R18194 / 383)).